The chain runs to 716 residues: MSVDSLVSCLEQLITDDLKLVEHQEVSNGATWASALQSTKDVPSHALTKTIVLKPKTAKSQTVVPIILAALETTSTPSGIAAKAVGSKEARMAAADLVEEVFGIPPTDVGIFSVNKENASKVHVVLDAALIQHNGLLAFHPSSSAKTVFVSPAAVQTYLKSVGVNPIIVDFSAPGSATAPSKPAAQKKKAEPSKNDAAIENAALIGITVRKDADFPNWYQQVLTKSDMIEYYDISGCYILKPWSYSIWEAIQGWFDKEIKKLGVRNGYFPLFVSSKVLEKEKDHVEGFAPEVAWVTRAGTSELDEPIAIRPTSETVMYPYYAKWIRSHRDLPLKLNQWNSVVRWEFKNPQPFLRTREFLWQEGHTAHMTLEGATEEVHQILDLYARIYTDLLAVPVIKGVKSENEKFAGGMFTTTVEGYIPTTGRGIQGATSHCLGQNFSKMFNIVVEDPNAEIGPTGERPKLFVWQNSWGLSTRTIGVAVMVHGDDKGLKLPPAIALVQSVVVPCGITNKTTDQERNEIEGFCSKLADRLNAADIRTEADLRAYTPGYKFSHWEMKGVPLRLEYGPNDAKKNQVTAVRRDTFEKIPVPLNNLEKGVSDLLAKIQTNMYETAKAERDAHVVKVKEWADFVPALNKKNIVMIPWCNTTECEKEIKKNSARQVNGDEPEDEKAPSMGAKSLCIPLEQPSGEDAIIEGTTKCAGCGNLAKVWGLFGRSY.

Positions 655-675 are disordered; the sequence is KNSARQVNGDEPEDEKAPSMG.

It belongs to the class-II aminoacyl-tRNA synthetase family.

The protein resides in the cytoplasm. The catalysed reaction is tRNA(Pro) + L-proline + ATP = L-prolyl-tRNA(Pro) + AMP + diphosphate. The polypeptide is Putative proline--tRNA ligase C19C7.06 (prs1) (Schizosaccharomyces pombe (strain 972 / ATCC 24843) (Fission yeast)).